Here is a 489-residue protein sequence, read N- to C-terminus: MGCLHSKTANLPSSDDPSAPNKPESVNGDQVDQEIQNFKEFELNELRKATNGFSPSCIVSEGGEKAPNVVYRGKLEGNHLVAIKRFSRQSWPDAQQFVVEATGVGKLRNKRIVSLIGCCAEGDERLLVAEYMPNDTLSKHLFHWEKQPLPWDMRVRIADYIAEALDYCNIENRKIYHDLNAYRILFDEEGDPRLSTFGLMKNSRDGKSYSTNLAYTPPEFLRTGRVIPESVIFSYGTILLDLLSGKHIPPSHALDIIRGKNALLLMDSSLEGQYANDDATKLVDLASKCLQSEAKDRPDTKFLLSAVAPLQKQEEVASHVLMGLPKNTVILPTMLSPLGKACAKMDLATFHDILLKTGYRDEEGAENELSFQEWTQQVQEMLNTKKFGDIAFRDKDFKNSIEYYSKLVGMMPVPSATVFARRAFSYLMTDQQELALRDAMQAQVCIPEWPTAFYLQALALSKLGMETDAQDMLNDGAAYDAKRQNSWRC.

Positions 1 to 30 (MGCLHSKTANLPSSDDPSAPNKPESVNGDQ) are disordered. The N-myristoyl glycine moiety is linked to residue glycine 2. A compositionally biased stretch (polar residues) spans 7-16 (KTANLPSSDD). A Protein kinase domain is found at 56–322 (SCIVSEGGEK…QEEVASHVLM (267 aa)). ATP is bound by residues 62-70 (GGEKAPNVV) and lysine 84. The active-site Proton acceptor is the aspartate 178.

This sequence belongs to the protein kinase superfamily. Ser/Thr protein kinase family. In terms of processing, phosphorylated by BRI1 upon brassinolide (BL) treatment.

Its subcellular location is the cell membrane. It carries out the reaction L-seryl-[protein] + ATP = O-phospho-L-seryl-[protein] + ADP + H(+). It catalyses the reaction L-threonyl-[protein] + ATP = O-phospho-L-threonyl-[protein] + ADP + H(+). In terms of biological role, probable serine/threonine kinase that acts as a positive regulator of brassinosteroid (BR) signaling downstream of the receptor kinase BRI1. Mediates signal transduction from BRI1 by functioning as substrate of BRI1. This is Serine/threonine-protein kinase BSK2 from Arabidopsis thaliana (Mouse-ear cress).